The following is a 485-amino-acid chain: Glucagon receptor (485 aa).

A signal peptide spans 1–26; that stretch reads MLLTQLHCPYLLLLLVVLSCLPKAPS. At 27–137 the chain is on the extracellular side; that stretch reads AQVMDFLFEK…EIEVQKGVAK (111 aa). Disulfide bonds link Cys44–Cys68, Cys59–Cys101, and Cys82–Cys122. N-linked (GlcNAc...) asparagine glycans are attached at residues Asn47, Asn60, Asn75, and Asn79. A helical membrane pass occupies residues 138-162; that stretch reads MYSSYQVMYTVGYSLSLGALLLALV. The Cytoplasmic segment spans residues 163–174; that stretch reads ILLGLRKLHCTR. The helical transmembrane segment at 175–199 threads the bilayer; sequence NYIHGNLFASFVLKAGSVLVIDWLL. The Extracellular portion of the chain corresponds to 200–226; that stretch reads KTRYSQKIGDDLSVSVWLSDGAVAGCR. An intrachain disulfide couples Cys225 to Cys295. The helical transmembrane segment at 227-250 threads the bilayer; that stretch reads VATVIMQYGIIANYCWLLVEGVYL. Over 251 to 264 the chain is Cytoplasmic; it reads YSLLSITTFSEKSF. Residues 265 to 286 form a helical membrane-spanning segment; the sequence is FSLYLCIGWGSPLLFVIPWVVV. Topologically, residues 287 to 304 are extracellular; the sequence is KCLFENVQCWTSNDNMGF. Residues 305–327 form a helical membrane-spanning segment; the sequence is WWILRIPVLLAILINFFIFVRII. The Cytoplasmic portion of the chain corresponds to 328–351; the sequence is HLLVAKLRAHQMHYADYKFRLARS. Residues 351–354 form an important for allosteric inhibitor binding region; sequence STLT. Residues 352–370 form a helical membrane-spanning segment; sequence TLTLIPLLGVHEVVFAFVT. Residues 371 to 382 are Extracellular-facing; it reads DEHAQGTLRSTK. Residues 383 to 403 traverse the membrane as a helical segment; that stretch reads LFFDLFFSSFQGLLVAVLYCF. At 404-485 the chain is on the cytoplasmic side; it reads LNKEVQAELL…SLPRLADSPT (82 aa). Residues 455-485 are disordered; the sequence is MSAGSSSGTGCEPSAKTSLASSLPRLADSPT. Polar residues predominate over residues 456–475; the sequence is SAGSSSGTGCEPSAKTSLAS. Phosphoserine is present on residues Ser460 and Ser476.

Belongs to the G-protein coupled receptor 2 family. Ligand-binding promotes phosphorylation of serine residues in the C-terminal cytoplasmic domain. Phosphorylation is important for receptor endocytosis after ligand-binding.

The protein localises to the cell membrane. Functionally, G-protein coupled receptor for glucagon that plays a central role in the regulation of blood glucose levels and glucose homeostasis. Regulates the rate of hepatic glucose production by promoting glycogen hydrolysis and gluconeogenesis. Plays an important role in mediating the responses to fasting. Ligand binding causes a conformation change that triggers signaling via guanine nucleotide-binding proteins (G proteins) and modulates the activity of down-stream effectors, such as adenylate cyclase. Promotes activation of adenylate cyclase. Besides, plays a role in signaling via a phosphatidylinositol-calcium second messenger system. The sequence is that of Glucagon receptor (Gcgr) from Rattus norvegicus (Rat).